Here is a 42-residue protein sequence, read N- to C-terminus: MRDLKTYLSVAPVLSTLWFGALAGLLIEINRFFPDALTFPFF.

The chain crosses the membrane as a helical span at residues 7–27 (YLSVAPVLSTLWFGALAGLLI).

The protein belongs to the PsaJ family.

The protein resides in the plastid. The protein localises to the chloroplast thylakoid membrane. In terms of biological role, may help in the organization of the PsaE and PsaF subunits. This chain is Photosystem I reaction center subunit IX, found in Guizotia abyssinica (Niger).